The chain runs to 932 residues: Glycine dehydrogenase (decarboxylating) (932 aa).

Lys-685 carries the post-translational modification N6-(pyridoxal phosphate)lysine.

Belongs to the GcvP family. As to quaternary structure, the glycine cleavage system is composed of four proteins: P, T, L and H. Pyridoxal 5'-phosphate serves as cofactor.

The catalysed reaction is N(6)-[(R)-lipoyl]-L-lysyl-[glycine-cleavage complex H protein] + glycine + H(+) = N(6)-[(R)-S(8)-aminomethyldihydrolipoyl]-L-lysyl-[glycine-cleavage complex H protein] + CO2. Its function is as follows. The glycine cleavage system catalyzes the degradation of glycine. The P protein binds the alpha-amino group of glycine through its pyridoxal phosphate cofactor; CO(2) is released and the remaining methylamine moiety is then transferred to the lipoamide cofactor of the H protein. This chain is Glycine dehydrogenase (decarboxylating), found in Brucella melitensis biotype 1 (strain ATCC 23456 / CCUG 17765 / NCTC 10094 / 16M).